The chain runs to 757 residues: Xaa-Pro dipeptidyl-peptidase (757 aa).

Residues serine 348, aspartate 468, and histidine 498 each act as charge relay system in the active site.

It belongs to the peptidase S15 family. In terms of assembly, homodimer.

The protein resides in the cytoplasm. The enzyme catalyses Hydrolyzes Xaa-Pro-|- bonds to release unblocked, N-terminal dipeptides from substrates including Ala-Pro-|-p-nitroanilide and (sequentially) Tyr-Pro-|-Phe-Pro-|-Gly-Pro-|-Ile.. In terms of biological role, removes N-terminal dipeptides sequentially from polypeptides having unsubstituted N-termini provided that the penultimate residue is proline. This is Xaa-Pro dipeptidyl-peptidase from Streptococcus pneumoniae (strain ATCC BAA-255 / R6).